Reading from the N-terminus, the 102-residue chain is Crustacean hyperglycemic hormones 3 (102 aa).

The first 22 residues, 1–22, serve as a signal peptide directing secretion; the sequence is MIALRLIAVTLVVAMAASTTWA. 3 disulfides stabilise this stretch: Cys-35-Cys-71, Cys-51-Cys-67, and Cys-54-Cys-80. Val-100 carries the valine amide modification.

Belongs to the arthropod CHH/MIH/GIH/VIH hormone family.

Its subcellular location is the secreted. Its function is as follows. Hormone found in the sinus gland of isopods and decapods which controls the blood sugar level. Has a secretagogue action over the amylase released from the midgut gland. May act as a stress hormone and may be involved in the control of molting and reproduction. This is Crustacean hyperglycemic hormones 3 (CHH3) from Penaeus monodon (Giant tiger prawn).